A 315-amino-acid polypeptide reads, in one-letter code: tRNA dimethylallyltransferase (315 aa).

13 to 20 is an ATP binding site; it reads GPTASGKT. 15-20 contacts substrate; sequence TASGKT. Interaction with substrate tRNA stretches follow at residues 38-41, 162-166, and 245-250; these read DSAL, QRIQR, and RCVGYR.

Belongs to the IPP transferase family. Monomer. The cofactor is Mg(2+).

It catalyses the reaction adenosine(37) in tRNA + dimethylallyl diphosphate = N(6)-dimethylallyladenosine(37) in tRNA + diphosphate. Functionally, catalyzes the transfer of a dimethylallyl group onto the adenine at position 37 in tRNAs that read codons beginning with uridine, leading to the formation of N6-(dimethylallyl)adenosine (i(6)A). In Methylobacillus flagellatus (strain ATCC 51484 / DSM 6875 / VKM B-1610 / KT), this protein is tRNA dimethylallyltransferase.